The chain runs to 188 residues: Elongation factor P-like protein (188 aa).

It belongs to the elongation factor P family.

This is Elongation factor P-like protein from Xanthomonas axonopodis pv. citri (strain 306).